A 937-amino-acid chain; its full sequence is ABC transporter A family member 4 (937 aa).

Transmembrane regions (helical) follow at residues 34-54 (LIVIPFYLCVLLVGIQVLFDT), 340-360 (IASVIGPIFLTWVIVLLFPVI), 394-414 (FLAISTLYIICLMIFGSAIGL), 423-443 (SIQFIFYFLCINLQISIAFLV), 455-475 (VAAYLYVFGSGLLGGFLFQFM), 478-498 (GLSFPRGWIFVMELYPGFSLY), and 528-548 (AMDEVFYIIIIEWFLALIAAY). An ABC transporter domain is found at 618-852 (DKLKKVYPGR…YGGSYVLTMT (235 aa)). Residue 653–660 (GPNGAGKT) coordinates ATP.

Belongs to the ABC transporter superfamily. ABCA family. CPR flippase (TC 3.A.1.211) subfamily.

The protein resides in the membrane. The polypeptide is ABC transporter A family member 4 (ABCA4) (Arabidopsis thaliana (Mouse-ear cress)).